The primary structure comprises 354 residues: Uroporphyrinogen decarboxylase (354 aa).

Substrate is bound by residues 27-31 (RQAGR), Asp77, Tyr154, Thr209, and His327.

This sequence belongs to the uroporphyrinogen decarboxylase family. Homodimer.

It localises to the cytoplasm. The enzyme catalyses uroporphyrinogen III + 4 H(+) = coproporphyrinogen III + 4 CO2. It participates in porphyrin-containing compound metabolism; protoporphyrin-IX biosynthesis; coproporphyrinogen-III from 5-aminolevulinate: step 4/4. Functionally, catalyzes the decarboxylation of four acetate groups of uroporphyrinogen-III to yield coproporphyrinogen-III. This chain is Uroporphyrinogen decarboxylase, found in Salmonella schwarzengrund (strain CVM19633).